Reading from the N-terminus, the 109-residue chain is Mitochondrial pyruvate carrier 1 (109 aa).

Alanine 2 carries the N-acetylalanine modification. Over 2-20 the chain is Mitochondrial matrix; the sequence is AGALVRKAADYVRSKDFRD. The chain crosses the membrane as a helical span at residues 21-41; the sequence is YLMSTHFWGPVANWGLPIAAI. The Mother cell cytoplasmic portion of the chain corresponds to 42 to 52; sequence NDMKKSPEIIS. The chain crosses the membrane as a helical span at residues 53–71; the sequence is GRMTFALCCYSLTFMRFAY. Lysine 72 bears the N6-acetyllysine mark. Over 72 to 109 the chain is Mitochondrial matrix; it reads KVQPRNWLLFACHATNEVAQLIQGGRLIRHEMSKKASA.

Homodimer. Forms heterodimer with MPC2. The heterodimer is the more stable and dominant form.

The protein localises to the mitochondrion inner membrane. It catalyses the reaction pyruvate(out) + H(+)(out) = pyruvate(in) + H(+)(in). Mediates the uptake of pyruvate into mitochondria. The chain is Mitochondrial pyruvate carrier 1 (MPC1) from Bos taurus (Bovine).